Reading from the N-terminus, the 259-residue chain is Proteasome subunit alpha (259 aa).

Belongs to the peptidase T1A family. As to quaternary structure, the 20S proteasome core is composed of 14 alpha and 14 beta subunits that assemble into four stacked heptameric rings, resulting in a barrel-shaped structure. The two inner rings, each composed of seven catalytic beta subunits, are sandwiched by two outer rings, each composed of seven alpha subunits. The catalytic chamber with the active sites is on the inside of the barrel. Has a gated structure, the ends of the cylinder being occluded by the N-termini of the alpha-subunits. Is capped at one or both ends by the proteasome regulatory ATPase, PAN.

The protein localises to the cytoplasm. The formation of the proteasomal ATPase PAN-20S proteasome complex, via the docking of the C-termini of PAN into the intersubunit pockets in the alpha-rings, triggers opening of the gate for substrate entry. Interconversion between the open-gate and close-gate conformations leads to a dynamic regulation of the 20S proteasome proteolysis activity. Its function is as follows. Component of the proteasome core, a large protease complex with broad specificity involved in protein degradation. This is Proteasome subunit alpha from Methanococcus maripaludis (strain C6 / ATCC BAA-1332).